Reading from the N-terminus, the 407-residue chain is Imidazolonepropionase (407 aa).

Residues His74 and His76 each contribute to the Fe(3+) site. Residues His74 and His76 each contribute to the Zn(2+) site. 4-imidazolone-5-propanoate-binding residues include Arg83, Tyr146, and His179. Residue Tyr146 coordinates N-formimidoyl-L-glutamate. Position 244 (His244) interacts with Fe(3+). A Zn(2+)-binding site is contributed by His244. A 4-imidazolone-5-propanoate-binding site is contributed by Gln247. Asp319 contributes to the Fe(3+) binding site. Asp319 lines the Zn(2+) pocket. 2 residues coordinate N-formimidoyl-L-glutamate: Asn321 and Gly323. 4-imidazolone-5-propanoate is bound at residue Thr324.

The protein belongs to the metallo-dependent hydrolases superfamily. HutI family. Zn(2+) serves as cofactor. Requires Fe(3+) as cofactor.

The protein localises to the cytoplasm. The enzyme catalyses 4-imidazolone-5-propanoate + H2O = N-formimidoyl-L-glutamate. It functions in the pathway amino-acid degradation; L-histidine degradation into L-glutamate; N-formimidoyl-L-glutamate from L-histidine: step 3/3. In terms of biological role, catalyzes the hydrolytic cleavage of the carbon-nitrogen bond in imidazolone-5-propanoate to yield N-formimidoyl-L-glutamate. It is the third step in the universal histidine degradation pathway. This Salmonella typhi protein is Imidazolonepropionase.